The sequence spans 183 residues: MQDSILTTVVKDIDGEVTTLEKFAGNVLLIVNVASKCGLTPQYEQLENIQKAWVDRGFMVLGFPCNQFLEQEPGSDEEIKTYCTTTWGVTFPMFSKIEVNGEGRHPLYQKLIAAAPTAVAPEESGFYARMVSKGRAPLYPDDILWNFEKFLVGRDGKVIQRFSPDMTPEDPIVMESIKLALAK.

Cys37 is a catalytic residue.

This sequence belongs to the glutathione peroxidase family. BtuE subfamily.

It localises to the periplasm. The catalysed reaction is 2 glutathione + H2O2 = glutathione disulfide + 2 H2O. It carries out the reaction a hydroperoxide + [thioredoxin]-dithiol = an alcohol + [thioredoxin]-disulfide + H2O. In terms of biological role, non-specific peroxidase that can use thioredoxin or glutathione as a reducing agent. In vitro, utilizes preferentially thioredoxin A to decompose hydrogen peroxide as well as cumene-, tert-butyl-, and linoleic acid hydroperoxides, suggesting that it may have one or more organic hydroperoxide as its physiological substrate. This Escherichia coli (strain K12) protein is Thioredoxin/glutathione peroxidase BtuE.